The chain runs to 299 residues: Taste receptor type 2 member 1 (299 aa).

Over 1 to 9 (MLESHLIIY) the chain is Extracellular. The helical transmembrane segment at 10–30 (FLLAVIQFLLGTFTNGIIVVV) threads the bilayer. Residues 31 to 55 (NGIDLIKHRKMAPLDLLLSCLAVSR) are Cytoplasmic-facing. The chain crosses the membrane as a helical span at residues 56–76 (IFLQLFIFYINVVVIFLIEFI). At 77-81 (TCSAS) the chain is on the extracellular side. A helical transmembrane segment spans residues 82 to 102 (CAFLVFVNELELWLATWLGVF). Residues 103-124 (YCAKVASVLHPLFIWLKMRISK) are Cytoplasmic-facing. The helical transmembrane segment at 125-145 (SVPWMILGSLLYVSMICIFHI) threads the bilayer. The Extracellular segment spans residues 146–178 (KYTGFMVPYFLRNLFFQNATIQTEVKQAIQIFS). N-linked (GlcNAc...) asparagine glycosylation is present at Asn-163. A helical membrane pass occupies residues 179–199 (FVAELLVPLLIFLVAVLLLIF). Residues 200 to 222 (SLGRHTRQMRNTVAGSRVPGRGA) are Cytoplasmic-facing. The chain crosses the membrane as a helical span at residues 223-243 (HISALLSILSFLILYISHYLI). Residues 244-257 (KTFLSSLKFHVKRF) lie on the Extracellular side of the membrane. A helical membrane pass occupies residues 258-278 (VFLFCILVIGTYPSGHSLILI). Over 279–299 (LGNPKLKQNTKKFLCHSKCCQ) the chain is Cytoplasmic.

This sequence belongs to the G-protein coupled receptor T2R family.

The protein localises to the membrane. In terms of biological role, receptor that may play a role in the perception of bitterness and is gustducin-linked. May play a role in sensing the chemical composition of the gastrointestinal content. The activity of this receptor may stimulate alpha gustducin, mediate PLC-beta-2 activation and lead to the gating of TRPM5. This Chlorocebus aethiops (Green monkey) protein is Taste receptor type 2 member 1 (TAS2R1).